The primary structure comprises 160 residues: uncharacterized protein (160 aa).

Residues 27–47 traverse the membrane as a helical segment; sequence VMNSYFIAGCGPAVCYYAVSW.

It is found in the membrane. This is an uncharacterized protein from Homo sapiens (Human).